An 812-amino-acid polypeptide reads, in one-letter code: Zn(2)-C6 fungal-type transcription factor pigI (812 aa).

The disordered stretch occupies residues 42-74 (GCLHPRSPPRDRTAMADNSNSSPPASRRREKPQ). A DNA-binding region (zn(2)-C6 fungal-type) is located at residues 77–105 (CTLCRRRKLRCDRRQPCETCVRRGLSLSC).

The protein localises to the nucleus. In terms of biological role, zn(2)-C6 fungal-type transcription factor; part of the gene cluster that mediates the biosynthesis of azaphilone pigments (MonAzPs), a complex mixture of compounds with a common azaphilone skeleton very widely used as food colorants. Acts probably as a negative regulator of the azaphilone pigments (MonAzPs) gene cluster. The polypeptide is Zn(2)-C6 fungal-type transcription factor pigI (Monascus ruber (Mold)).